The sequence spans 354 residues: 3-isopropylmalate dehydrogenase (354 aa).

Residues Arg96, Arg106, Arg132, and Asp223 each contribute to the substrate site. Mg(2+) contacts are provided by Asp223, Asp247, and Asp251. 283–295 (GSAPDIAGQGKAD) lines the NAD(+) pocket.

Belongs to the isocitrate and isopropylmalate dehydrogenases family. LeuB type 2 subfamily. As to quaternary structure, homodimer. Mg(2+) is required as a cofactor. Requires Mn(2+) as cofactor.

It is found in the cytoplasm. It carries out the reaction (2R,3S)-3-isopropylmalate + NAD(+) = 4-methyl-2-oxopentanoate + CO2 + NADH. Its pathway is amino-acid biosynthesis; L-leucine biosynthesis; L-leucine from 3-methyl-2-oxobutanoate: step 3/4. Functionally, catalyzes the oxidation of 3-carboxy-2-hydroxy-4-methylpentanoate (3-isopropylmalate) to 3-carboxy-4-methyl-2-oxopentanoate. The product decarboxylates to 4-methyl-2 oxopentanoate. The chain is 3-isopropylmalate dehydrogenase from Thermobifida fusca (strain YX).